Here is a 304-residue protein sequence, read N- to C-terminus: Methionyl-tRNA formyltransferase (304 aa).

111 to 114 serves as a coordination point for (6S)-5,6,7,8-tetrahydrofolate; that stretch reads SLLP.

Belongs to the Fmt family.

It catalyses the reaction L-methionyl-tRNA(fMet) + (6R)-10-formyltetrahydrofolate = N-formyl-L-methionyl-tRNA(fMet) + (6S)-5,6,7,8-tetrahydrofolate + H(+). In terms of biological role, attaches a formyl group to the free amino group of methionyl-tRNA(fMet). The formyl group appears to play a dual role in the initiator identity of N-formylmethionyl-tRNA by promoting its recognition by IF2 and preventing the misappropriation of this tRNA by the elongation apparatus. This chain is Methionyl-tRNA formyltransferase, found in Campylobacter fetus subsp. fetus (strain 82-40).